Here is a 210-residue protein sequence, read N- to C-terminus: Pyridoxine/pyridoxamine 5'-phosphate oxidase (210 aa).

Substrate-binding positions include 7–10 and Lys65; that span reads REDY. Residues 60–65, 75–76, Arg81, Lys82, and Gln104 contribute to the FMN site; these read RMVLLK and FT. Substrate is bound by residues Tyr122, Arg126, and Ser130. Residues 139 to 140 and Trp183 each bind FMN; that span reads QS. 189–191 contributes to the substrate binding site; that stretch reads RLH. Arg193 contacts FMN.

It belongs to the pyridoxamine 5'-phosphate oxidase family. As to quaternary structure, homodimer. Requires FMN as cofactor.

The enzyme catalyses pyridoxamine 5'-phosphate + O2 + H2O = pyridoxal 5'-phosphate + H2O2 + NH4(+). The catalysed reaction is pyridoxine 5'-phosphate + O2 = pyridoxal 5'-phosphate + H2O2. The protein operates within cofactor metabolism; pyridoxal 5'-phosphate salvage; pyridoxal 5'-phosphate from pyridoxamine 5'-phosphate: step 1/1. It participates in cofactor metabolism; pyridoxal 5'-phosphate salvage; pyridoxal 5'-phosphate from pyridoxine 5'-phosphate: step 1/1. In terms of biological role, catalyzes the oxidation of either pyridoxine 5'-phosphate (PNP) or pyridoxamine 5'-phosphate (PMP) into pyridoxal 5'-phosphate (PLP). The protein is Pyridoxine/pyridoxamine 5'-phosphate oxidase of Neisseria meningitidis serogroup A / serotype 4A (strain DSM 15465 / Z2491).